Consider the following 182-residue polypeptide: Translation initiation factor IF-3 (182 aa).

It belongs to the IF-3 family. In terms of assembly, monomer.

The protein localises to the cytoplasm. Functionally, IF-3 binds to the 30S ribosomal subunit and shifts the equilibrium between 70S ribosomes and their 50S and 30S subunits in favor of the free subunits, thus enhancing the availability of 30S subunits on which protein synthesis initiation begins. The protein is Translation initiation factor IF-3 of Thermosynechococcus vestitus (strain NIES-2133 / IAM M-273 / BP-1).